The primary structure comprises 127 residues: DNA-directed RNA polymerase subunit omega (127 aa).

Belongs to the RNA polymerase subunit omega family. As to quaternary structure, the RNAP catalytic core consists of 2 alpha, 1 beta, 1 beta' and 1 omega subunit. When a sigma factor is associated with the core the holoenzyme is formed, which can initiate transcription.

It carries out the reaction RNA(n) + a ribonucleoside 5'-triphosphate = RNA(n+1) + diphosphate. Functionally, promotes RNA polymerase assembly. Latches the N- and C-terminal regions of the beta' subunit thereby facilitating its interaction with the beta and alpha subunits. This chain is DNA-directed RNA polymerase subunit omega (rpoZ), found in Rickettsia prowazekii (strain Madrid E).